The sequence spans 144 residues: Large ribosomal subunit protein uL15 (144 aa).

Residues methionine 1 to glutamate 51 form a disordered region. Positions arginine 21 to glycine 31 are enriched in gly residues. The segment covering glycine 32–arginine 47 has biased composition (basic residues).

The protein belongs to the universal ribosomal protein uL15 family. Part of the 50S ribosomal subunit.

In terms of biological role, binds to the 23S rRNA. The chain is Large ribosomal subunit protein uL15 from Actinobacillus succinogenes (strain ATCC 55618 / DSM 22257 / CCUG 43843 / 130Z).